The following is a 485-amino-acid chain: N-succinylglutamate 5-semialdehyde dehydrogenase (485 aa).

220 to 225 contributes to the NAD(+) binding site; it reads GSANTG. Active-site residues include E243 and C278.

This sequence belongs to the aldehyde dehydrogenase family. AstD subfamily.

The enzyme catalyses N-succinyl-L-glutamate 5-semialdehyde + NAD(+) + H2O = N-succinyl-L-glutamate + NADH + 2 H(+). Its pathway is amino-acid degradation; L-arginine degradation via AST pathway; L-glutamate and succinate from L-arginine: step 4/5. Catalyzes the NAD-dependent reduction of succinylglutamate semialdehyde into succinylglutamate. The polypeptide is N-succinylglutamate 5-semialdehyde dehydrogenase (Vibrio cholerae serotype O1 (strain M66-2)).